We begin with the raw amino-acid sequence, 737 residues long: MDAEKATDKTNVHLSSDHERCPVEEVALVVPETDDPSLPVMTFRAWFLGLTSCVLLIFLNTFFTYRTQPLTISAILMQIAVLPIGKFMARTLPTTSHNLLGWSFSLNPGPFNIKEHVIITIFANCGVAYGGGDAYSIGAITVMKAYYKQSLSFICGLFIVLTTQILGYGWAGILRRYLVDPVDMWWPSNLAQVSLFRALHEKENKSKGLTRMKFFLVALGASFIYYALPGYLFPILTFFSWVCWAWPNSITAQQVGSGYHGLGVGAFTLDWAGISAYHGSPLVAPWSSILNVGVGFIMFIYIIVPVCYWKFNTFDARKFPIFSNQLFTTSGQKYDTTKILTPQFDLDIGAYNNYGKLYLSPLFALSIGSGFARFTATLTHVALFNGRDIWKQTWSAVNTTKLDIHGKLMQSYKKVPEWWFYILLAGSVAMSLLMSFVWKESVQLPWWGMLFAFALAFIVTLPIGVIQATTNQQPGYDIIGQFIIGYILPGKPIANLIFKIYGRISTVHALSFLADLKLGHYMKIPPRCMYTAQLVGTVVAGVVNLGVAWWMLESIQDICDIEGDHPNSPWTCPKYRVTFDASVIWGLIGPRRLFGPGGMYRNLVWLFLIGAVLPVPVWALSKIFPNKKWIPLINIPVISYGFAGMPPATPTNIASWLVTGTIFNYFVFNYHKRWWQKYNYVLSAALDAGTAFMGVLLFFALQNAGHDLKWWGTEVDHCPLASCPTAPGIKAKGCPVF.

Transmembrane regions (helical) follow at residues 45-65 (AWFLGLTSCVLLIFLNTFFTY), 69-89 (PLTISAILMQIAVLPIGKFMA), 117-137 (VIITIFANCGVAYGGGDAYSI), 153-173 (FICGLFIVLTTQILGYGWAGI), 215-235 (FLVALGASFIYYALPGYLFPI), 255-275 (VGSGYHGLGVGAFTLDWAGIS), 289-309 (ILNVGVGFIMFIYIIVPVCYW), 357-377 (LYLSPLFALSIGSGFARFTAT), 418-438 (WWFYILLAGSVAMSLLMSFVW), 446-466 (WWGMLFAFALAFIVTLPIGVI), 478-498 (IIGQFIIGYILPGKPIANLIF), 532-552 (AQLVGTVVAGVVNLGVAWWML), 604-624 (VWLFLIGAVLPVPVWALSKIF), 629-649 (WIPLINIPVISYGFAGMPPAT), 650-670 (PTNIASWLVTGTIFNYFVFNY), and 681-701 (VLSAALDAGTAFMGVLLFFAL).

The protein belongs to the oligopeptide OPT transporter (TC 2.A.67.1) family. As to expression, strong expression in flowers, leaves and roots. Preferentially expressed in the vascular tissues of seedlings and mature plants as well as in pollen and developing embryos.

The protein localises to the membrane. May be involved in the translocation of tetra- and pentapeptides across the cellular membrane in an energy-dependent manner. Also acts as a metal transporter that could be a component of the copper transport machinery. Essential for early embryo development. The chain is Oligopeptide transporter 3 (OPT3) from Arabidopsis thaliana (Mouse-ear cress).